The sequence spans 218 residues: Small ribosomal subunit protein uS3c (218 aa).

The region spanning 43–118 (IKDYVKKNKK…RLNIAITRIE (76 aa)) is the KH type-2 domain.

This sequence belongs to the universal ribosomal protein uS3 family. As to quaternary structure, part of the 30S ribosomal subunit.

It localises to the plastid. It is found in the chloroplast. The sequence is that of Small ribosomal subunit protein uS3c (rps3) from Phalaenopsis aphrodite subsp. formosana (Moth orchid).